Consider the following 313-residue polypeptide: MSFLNTIRGLGRGSKKNKKDLEPSNNAIYSHSNLSGNGLRRTQSPTKFSPSKLSSKGAQGSAAYTSSPTKRSRTGQSLQHQDSQSSLQYQQQSGSVSPSKRSSIQTTKSTTVNADPPLFLCEPYVKTALVKGSFKTIVQLPKYVDYCEWLALNIFELFNHLNRFYGVIQEYATPEAYPTMNAGPNTNYLWVNSSGQAVNLPACQYIEYVITWVTNKLNDQSVFPTKNGGAFPPNFIKDCKNISRQMFRIFAHIYHNHFDKIIHLSLEAHWNSFFAHFISFVKEFNLIDRTEMEPLLPLIENFEQQGKITQASK.

The segment at 1–109 is disordered; the sequence is MSFLNTIRGL…KRSSIQTTKS (109 aa). Over residues 23 to 69 the composition is skewed to polar residues; the sequence is PSNNAIYSHSNLSGNGLRRTQSPTKFSPSKLSSKGAQGSAAYTSSPT. Phosphoserine; by CDC28 is present on residues serine 44, serine 51, serine 67, and serine 97. The segment covering 76–97 has biased composition (low complexity); that stretch reads QSLQHQDSQSSLQYQQQSGSVS. A compositionally biased stretch (polar residues) spans 98-109; that stretch reads PSKRSSIQTTKS.

It belongs to the MOB1/phocein family. As to quaternary structure, interacts with protein kinase CBK1 to form the RAM CBK1-MOB2 kinase complex. In terms of processing, phosphorylated by CDC28 at Ser-44, Ser-51, Ser-67, and Ser-97. Phosphorylation occurs during bud emergence and is maintained until the G2/M transition. Dephosphorylated at the end of mitosis. Phosphorylation is required for the maintenance of polarisome components in hyphae.

Its subcellular location is the nucleus. The protein resides in the cytoplasm. Its function is as follows. Functions as an activator subunit for the CBK1 protein kinase. Part of the regulation of ACE2 activity and cellular morphogenesis (RAM) signaling network. The RAM network is critically required for hyphal growth as well as normal vegetative growth, and for polarization of lipid rafts and the actin cytoskeleton. It play an essential role in biofilm formation. The RAM network also plays a role in serum- and antifungal azoles-induced activation of ergosterol biosynthesis genes, especially those involved in the late steps of ergosterol biosynthesis. The chain is CBK1 kinase activator protein MOB2 (MOB2) from Candida albicans (strain SC5314 / ATCC MYA-2876) (Yeast).